An 85-amino-acid polypeptide reads, in one-letter code: Beta-defensin 18 (85 aa).

Positions 1 to 23 (MQSAMKLFFIFLIFVFSVSCGPS) are cleaved as a signal peptide. Intrachain disulfides connect cysteine 39–cysteine 65, cysteine 46–cysteine 60, and cysteine 50–cysteine 66.

Belongs to the beta-defensin family.

It localises to the secreted. Has antibacterial activity. The chain is Beta-defensin 18 (Defb18) from Rattus norvegicus (Rat).